Here is an 822-residue protein sequence, read N- to C-terminus: AP-1 complex subunit gamma-1 (822 aa).

A disordered region spans residues 597-628 (EIVQTNGETEPAPLETKPPPSGPQPTSQANDL). Residues 702–817 (AGIPSITAYS…QDLAEVNNFP (116 aa)) form the GAE domain.

Belongs to the adaptor complexes large subunit family. As to quaternary structure, adaptor protein complex 1 (AP-1) is a heterotetramer composed of two large adaptins (gamma-type subunit AP1G1 and beta-type subunit AP1B1), a medium adaptin (mu-type subunit AP1M1 or AP1M2) and a small adaptin (sigma-type subunit AP1S1 or AP1S2 or AP1S3). Interacts (via GAE domain) with RABEP1. Interacts with SYNRG/gamma-synergin. Interacts with EPS15. Interacts (via GAE domain) with AP1AR (via coiled-coil domain). Interacts with CLN3 (via dileucine motif); this interaction facilitates lysosomal targeting. Interacts (via GAE domain) with AFTPH/aftiphilin; the interaction is required to recruit AFTPH/aftiphilin to the perinuclear region of the cell. Widely expressed.

The protein resides in the golgi apparatus. It localises to the cytoplasmic vesicle. It is found in the clathrin-coated vesicle membrane. Its subcellular location is the cytoplasm. The protein localises to the perinuclear region. The protein resides in the clathrin-coated vesicle. It localises to the membrane. It is found in the clathrin-coated pit. Functionally, subunit of clathrin-associated adaptor protein complex 1 that plays a role in protein sorting in the late-Golgi/trans-Golgi network (TGN) and/or endosomes. The AP complexes mediate both the recruitment of clathrin to membranes and the recognition of sorting signals within the cytosolic tails of transmembrane cargo molecules. In association with AFTPH/aftiphilin in the aftiphilin/p200/gamma-synergin complex, involved in the trafficking of transferrin from early to recycling endosomes, and the membrane trafficking of furin and the lysosomal enzyme cathepsin D between the trans-Golgi network (TGN) and endosomes. The sequence is that of AP-1 complex subunit gamma-1 (AP1G1) from Homo sapiens (Human).